We begin with the raw amino-acid sequence, 115 residues long: Photosystem II reaction center Psb28 protein (115 aa).

The protein belongs to the Psb28 family. As to quaternary structure, part of the photosystem II complex.

The protein localises to the plastid. Its subcellular location is the chloroplast thylakoid membrane. This Cyanidium caldarium (Red alga) protein is Photosystem II reaction center Psb28 protein.